The primary structure comprises 391 residues: Elongation factor Tu (391 aa).

In terms of domain architecture, tr-type G spans 10–201 (KPHVNIGTVG…AVDEYIPTPE (192 aa)). A G1 region spans residues 19–26 (GHVDHGKT). 19-26 (GHVDHGKT) contacts GTP. Residue Thr26 participates in Mg(2+) binding. Positions 55–59 (GITIS) are G2. Residues 76 to 79 (DCPG) are G3. GTP is bound by residues 76 to 80 (DCPGH) and 131 to 134 (NKVD). Residues 131–134 (NKVD) are G4. Positions 169-171 (SAL) are G5.

The protein belongs to the TRAFAC class translation factor GTPase superfamily. Classic translation factor GTPase family. EF-Tu/EF-1A subfamily. As to quaternary structure, monomer.

It is found in the cytoplasm. It carries out the reaction GTP + H2O = GDP + phosphate + H(+). In terms of biological role, GTP hydrolase that promotes the GTP-dependent binding of aminoacyl-tRNA to the A-site of ribosomes during protein biosynthesis. The chain is Elongation factor Tu from Ruegeria sp. (strain TM1040) (Silicibacter sp.).